Consider the following 198-residue polypeptide: Recombination protein RecR (198 aa).

A C4-type zinc finger spans residues 56 to 71 (CDICGNVSEEPTCRIC). Residues 79–175 (AVVCVVEEPK…NVTRLASGLP (97 aa)) form the Toprim domain.

It belongs to the RecR family.

Its function is as follows. May play a role in DNA repair. It seems to be involved in an RecBC-independent recombinational process of DNA repair. It may act with RecF and RecO. The polypeptide is Recombination protein RecR (Saccharopolyspora erythraea (strain ATCC 11635 / DSM 40517 / JCM 4748 / NBRC 13426 / NCIMB 8594 / NRRL 2338)).